A 492-amino-acid chain; its full sequence is Peptidyl-prolyl cis-trans isomerase-like 4 (492 aa).

In terms of domain architecture, PPIase cyclophilin-type spans 1–161 (MAVLLETTLG…QDIRINHTVI (161 aa)). Residues 167–188 (DDPPDLLIPDRSPEPTKEQLDS) are disordered. Over residues 177–187 (RSPEPTKEQLD) the composition is skewed to basic and acidic residues. The residue at position 178 (S178) is a Phosphoserine. T182 carries the phosphothreonine modification. Residues K201, K212, and K218 each participate in a glycyl lysine isopeptide (Lys-Gly) (interchain with G-Cter in SUMO2) cross-link. Residues 240 to 318 (NVLFVCKLNP…RRIHVDFSQS (79 aa)) form the RRM domain. Residues K321 and K362 each participate in a glycyl lysine isopeptide (Lys-Gly) (interchain with G-Cter in SUMO2) cross-link. 2 disordered regions span residues 368 to 409 (DEQG…NPNQ) and 423 to 492 (EESC…SKYR). The span at 377–390 (SHSHTSKKHKKKTR) shows a compositional bias: basic residues. S393 is subject to Phosphoserine. K405 participates in a covalent cross-link: Glycyl lysine isopeptide (Lys-Gly) (interchain with G-Cter in SUMO2). Over residues 426–436 (CWEKQKNEKRD) the composition is skewed to basic and acidic residues. K460 participates in a covalent cross-link: Glycyl lysine isopeptide (Lys-Gly) (interchain with G-Cter in SUMO2). S471 is subject to Phosphoserine. Basic residues predominate over residues 473 to 485 (KRDRSRSPKKSKA).

Belongs to the cyclophilin-type PPIase family. PPIL4 subfamily.

The protein localises to the nucleus. It catalyses the reaction [protein]-peptidylproline (omega=180) = [protein]-peptidylproline (omega=0). In terms of biological role, PPIases accelerate the folding of proteins. It catalyzes the cis-trans isomerization of proline imidic peptide bonds in oligopeptides. The sequence is that of Peptidyl-prolyl cis-trans isomerase-like 4 (Ppil4) from Mus musculus (Mouse).